The following is a 178-amino-acid chain: Adenine phosphoribosyltransferase (178 aa).

Belongs to the purine/pyrimidine phosphoribosyltransferase family. Homodimer.

It localises to the cytoplasm. It carries out the reaction AMP + diphosphate = 5-phospho-alpha-D-ribose 1-diphosphate + adenine. The protein operates within purine metabolism; AMP biosynthesis via salvage pathway; AMP from adenine: step 1/1. In terms of biological role, catalyzes a salvage reaction resulting in the formation of AMP, that is energically less costly than de novo synthesis. The chain is Adenine phosphoribosyltransferase from Bacteroides fragilis (strain YCH46).